The primary structure comprises 359 residues: GTP cyclohydrolase FolE2 (359 aa).

The protein belongs to the GTP cyclohydrolase IV family.

The catalysed reaction is GTP + H2O = 7,8-dihydroneopterin 3'-triphosphate + formate + H(+). The protein operates within cofactor biosynthesis; 7,8-dihydroneopterin triphosphate biosynthesis; 7,8-dihydroneopterin triphosphate from GTP: step 1/1. Functionally, converts GTP to 7,8-dihydroneopterin triphosphate. This is GTP cyclohydrolase FolE2 from Cereibacter sphaeroides (strain ATCC 17029 / ATH 2.4.9) (Rhodobacter sphaeroides).